The sequence spans 298 residues: Heterogeneous nuclear ribonucleoprotein C (298 aa).

At Ala-2 the chain carries N-acetylalanine. Residues Lys-8, Lys-50, Lys-89, and Lys-94 each participate in a glycyl lysine isopeptide (Lys-Gly) (interchain with G-Cter in SUMO2) cross-link. Residues Ser-16–Glu-87 enclose the RRM domain. Position 108 is a phosphoserine (Ser-108). 2 disordered regions span residues Pro-131–Asp-177 and Glu-204–Ser-298. The Nuclear localization signal motif lies at Pro-142–Val-148. Ser-149 and Ser-153 each carry phosphoserine. The segment covering Ser-162–Ser-173 has biased composition (low complexity). The residue at position 163 (Lys-163) is an N6-acetyllysine; alternate. Lys-163 participates in a covalent cross-link: Glycyl lysine isopeptide (Lys-Gly) (interchain with G-Cter in SUMO2); alternate. Positions Gly-176 to Ala-211 form a coiled coil. Lys-209 participates in a covalent cross-link: Glycyl lysine isopeptide (Lys-Gly) (interchain with G-Cter in SUMO2). Residues Ser-214, Ser-216, and Ser-217 each carry the phosphoserine modification. A Glycyl lysine isopeptide (Lys-Gly) (interchain with G-Cter in SUMO2) cross-link involves residue Lys-222. Residue Lys-225 forms a Glycyl lysine isopeptide (Lys-Gly) (interchain with G-Cter in SUMO2); alternate linkage. Lys-225 is covalently cross-linked (Glycyl lysine isopeptide (Lys-Gly) (interchain with G-Cter in SUMO1); alternate). A phosphoserine mark is found at Ser-226, Ser-231, Ser-232, and Ser-234. Positions Val-235 to Ser-246 are enriched in basic and acidic residues. Residues Lys-236 and Lys-237 each participate in a glycyl lysine isopeptide (Lys-Gly) (interchain with G-Cter in SUMO2) cross-link. Lys-243 participates in a covalent cross-link: Glycyl lysine isopeptide (Lys-Gly) (interchain with G-Cter in SUMO2); alternate. Lys-243 participates in a covalent cross-link: Glycyl lysine isopeptide (Lys-Gly) (interchain with G-Cter in SUMO); alternate. 2 positions are modified to phosphoserine: Ser-246 and Ser-253. Residues Ala-248–Gly-269 are compositionally biased toward acidic residues. The segment covering Asp-270–Glu-279 has biased composition (basic and acidic residues). The segment covering Lys-280–Ser-298 has biased composition (acidic residues). Phosphoserine is present on residues Ser-291 and Ser-298.

This sequence belongs to the RRM HNRPC family. RALY subfamily. In terms of assembly, tetramer composed of 3 copies of isoform C1 and 1 copy of isoform C2. Assembly of 3 tetramers with bound pre-mRNA gives rise to a 19S complex that interacts with HNRNPA2B1 tetramers. Component of the 40S hnRNP particle. Identified in the spliceosome C complex. Interacts with IGF2BP1. Interacts with PPIA/CYPA. Phosphorylated on Ser-253 and Ser-291 in resting cells. Post-translationally, sumoylated. Sumoylation reduces affinity for mRNA. In terms of processing, ubiquitinated and degraded after nucleo-cytoplasmic transport by YWHAE.

It localises to the nucleus. In terms of biological role, binds pre-mRNA and nucleates the assembly of 40S hnRNP particles. Interacts with poly-U tracts in the 3'-UTR or 5'-UTR of mRNA and modulates the stability and the level of translation of bound mRNA molecules. Single HNRNPC tetramers bind 230-240 nucleotides. Trimers of HNRNPC tetramers bind 700 nucleotides. May play a role in the early steps of spliceosome assembly and pre-mRNA splicing. N6-methyladenosine (m6A) has been shown to alter the local structure in mRNAs and long non-coding RNAs (lncRNAs) via a mechanism named 'm(6)A-switch', facilitating binding of HNRNPC, leading to regulation of mRNA splicing. This Rattus norvegicus (Rat) protein is Heterogeneous nuclear ribonucleoprotein C.